Reading from the N-terminus, the 380-residue chain is Cytochrome b (380 aa).

The next 4 helical transmembrane spans lie at 34–54 (FGSL…LLAT), 78–99 (WLIR…YLHI), 114–134 (WNTG…GYVL), and 179–199 (FFAL…IHLT). Residues His-84 and His-98 each contribute to the heme b site. Residues His-183 and His-197 each coordinate heme b. Residue His-202 participates in a ubiquinone binding. The next 4 membrane-spanning stretches (helical) occupy residues 227–247 (LKDI…ALFS), 289–309 (LGGV…PLLH), 321–341 (LSQL…WVGS), and 348–368 (FIII…LLFP).

The protein belongs to the cytochrome b family. In terms of assembly, the cytochrome bc1 complex contains 11 subunits: 3 respiratory subunits (MT-CYB, CYC1 and UQCRFS1), 2 core proteins (UQCRC1 and UQCRC2) and 6 low-molecular weight proteins (UQCRH/QCR6, UQCRB/QCR7, UQCRQ/QCR8, UQCR10/QCR9, UQCR11/QCR10 and a cleavage product of UQCRFS1). This cytochrome bc1 complex then forms a dimer. Requires heme b as cofactor.

It is found in the mitochondrion inner membrane. Functionally, component of the ubiquinol-cytochrome c reductase complex (complex III or cytochrome b-c1 complex) that is part of the mitochondrial respiratory chain. The b-c1 complex mediates electron transfer from ubiquinol to cytochrome c. Contributes to the generation of a proton gradient across the mitochondrial membrane that is then used for ATP synthesis. This is Cytochrome b (MT-CYB) from Cepphus grylle (Black guillemot).